Consider the following 86-residue polypeptide: Small ribosomal subunit protein uS15 (86 aa).

It belongs to the universal ribosomal protein uS15 family. Part of the 30S ribosomal subunit. Forms a bridge to the 50S subunit in the 70S ribosome, contacting the 23S rRNA.

One of the primary rRNA binding proteins, it binds directly to 16S rRNA where it helps nucleate assembly of the platform of the 30S subunit by binding and bridging several RNA helices of the 16S rRNA. Its function is as follows. Forms an intersubunit bridge (bridge B4) with the 23S rRNA of the 50S subunit in the ribosome. This Mycoplasma pneumoniae (strain ATCC 29342 / M129 / Subtype 1) (Mycoplasmoides pneumoniae) protein is Small ribosomal subunit protein uS15.